The chain runs to 248 residues: Mitochondrial import inner membrane translocase subunit Tim21 (248 aa).

The transit peptide at 1–18 directs the protein to the mitochondrion; the sequence is MICTFLRAVQYTEKLHRS. The segment at 67–98 is disordered; it reads TQGPSPRKAKEDGSKQVSVHRSQRGGTAVPTS. A helical transmembrane segment spans residues 108 to 128; it reads FTYLIVVLFGISITGGLFYTI.

Belongs to the TIM21 family. Component of the TIM23 complex. Component of the MITRAC (mitochondrial translation regulation assembly intermediate of cytochrome c oxidase complex) complex, the core components of this complex being COA3/MITRAC12 and COX14. Interacts with COA3 and MT-CO1/COX1.

The protein resides in the mitochondrion membrane. Functionally, participates in the translocation of transit peptide-containing proteins across the mitochondrial inner membrane. Also required for assembly of mitochondrial respiratory chain complex I and complex IV as component of the MITRAC (mitochondrial translation regulation assembly intermediate of cytochrome c oxidase complex) complex. Probably shuttles between the presequence translocase and respiratory-chain assembly intermediates in a process that promotes incorporation of early nuclear-encoded subunits into these complexes. This is Mitochondrial import inner membrane translocase subunit Tim21 (TIMM21) from Homo sapiens (Human).